Here is a 465-residue protein sequence, read N- to C-terminus: MGSKTPNDHRRGPNVESSPHAAIDTINPPKHAAASGLLHGPLEGETEDGEDEDDDKTGADLKSVGQLNNSTKKKNKRKKNKKKKKTLLGGLQTTPPRVALSSIFYNQRYPEAEIVGYTTNNDNLQRITAEEFRHLCVVNDMDDEFLNDYRKAAEVHRQVRQYVQTITKPGIAMSQLAQEIEDGVRALTDHQGIETGDALKAGMAFPTGLCLNNIGAHWTPNPGAKEVILQYDDVLKVDFGVHVNGRIVDSAYTMAFNPVYDDLLTAVKAATNTGLKEAGIDARIDCISEAIQEVMESYEVELNRKIIPVKAVRNITGHNILRYKIHGDKQVPFVKTHTNQRMEEGDIFAIETFGSTGKAYLDDDIGIYGYFCDEHASAAGLHHSSAKSLLKTIKDNFGTLVFSRRYLERLGVKSYHLGMRSLVSKGIVQSYAPLVDVPGSYVAQFEHTVLLRPNCKEVISRGDDY.

Residues 1–13 (MGSKTPNDHRRGP) are compositionally biased toward basic and acidic residues. Positions 1–92 (MGSKTPNDHR…KKKTLLGGLQ (92 aa)) are disordered. Over residues 44–55 (GETEDGEDEDDD) the composition is skewed to acidic residues. Residues 71–86 (TKKKNKRKKNKKKKKT) are compositionally biased toward basic residues. H217 is a binding site for substrate. The a divalent metal cation site is built by D238, D249, and H318. H326 is a substrate binding site. A divalent metal cation is bound by residues E351 and E446.

Belongs to the peptidase M24A family. Methionine aminopeptidase eukaryotic type 2 subfamily. The cofactor is Co(2+). It depends on Zn(2+) as a cofactor. Mn(2+) serves as cofactor. Requires Fe(2+) as cofactor.

The protein localises to the cytoplasm. The enzyme catalyses Release of N-terminal amino acids, preferentially methionine, from peptides and arylamides.. Cotranslationally removes the N-terminal methionine from nascent proteins. The N-terminal methionine is often cleaved when the second residue in the primary sequence is small and uncharged (Met-Ala-, Cys, Gly, Pro, Ser, Thr, or Val). In Blastomyces gilchristii (strain SLH14081) (Blastomyces dermatitidis), this protein is Methionine aminopeptidase 2-2.